The following is a 315-amino-acid chain: NAD(P)H-dependent anabolic L-arginine dehydrogenase DauB (315 aa).

The protein belongs to the ornithine cyclodeaminase/mu-crystallin family.

It catalyses the reaction L-arginine + NAD(+) + H2O = 5-guanidino-2-oxopentanoate + NH4(+) + NADH + H(+). The enzyme catalyses L-arginine + NADP(+) + H2O = 5-guanidino-2-oxopentanoate + NH4(+) + NADPH + H(+). In terms of biological role, involved in the anabolism of D-lysine and D-arginine. Under aerobic conditions, the arginine succinyltransferase (AST) and arginine transaminase (ATA) pathways are 2 major routes for L-arginine utilization as the sole source of carbon and nitrogen. The D-to-L racemization of arginine by DauA and DauB is necessary, before to be channeled into the AST and/or ATA pathways. DauB catalyzes the synthesis of L-arginine from 2-ketoarginine (2-KA) and ammonium. The sequence is that of NAD(P)H-dependent anabolic L-arginine dehydrogenase DauB from Pseudomonas aeruginosa (strain ATCC 15692 / DSM 22644 / CIP 104116 / JCM 14847 / LMG 12228 / 1C / PRS 101 / PAO1).